A 221-amino-acid chain; its full sequence is MLSTGVKSLDELLGGGFGEGVLTQIYGPYATGKTTLAVQTGLLSGKKVAYVDTEGGFSPERLSQMASARGLDPEEALSRFLLFTPGDIREQRRVIGSLKRLITPEFSLVVVDSITAHYRAEEDWRSLTSELGKQLQVLLWIARKHRIPVLVINQVHFDARAERTRPVAEQTLGYRCKDILRLDKLPTPGKRVAILERHRFRPEGGMVYFKITEKGIEDVSD.

Belongs to the eukaryotic RecA-like protein family. RadB subfamily.

Its function is as follows. Involved in DNA repair and in homologous recombination. May regulate the cleavage reactions of the branch-structured DNA. Has a very weak ATPase activity that is not stimulated by DNA. Binds DNA but does not promote DNA strands exchange. This Thermococcus gammatolerans (strain DSM 15229 / JCM 11827 / EJ3) protein is DNA repair and recombination protein RadB.